A 200-amino-acid chain; its full sequence is MQIERPNVALIAGVDEVGRGPLVGDVVTAAVILDPSKPIAGLADSKKLTDKKRQALAIEIQEKALCYAYGRCSPTEIDELNILHATMLAMTRAVEGLSTQPEFVFIDGNRLPKLTMPAQAIVKGDSLVAEISAASILAKVARDNEMVELDKRHPEYGFAGHKGYPTKAHFAALEQYGAIKEHRKSFKPVQRVLAQAKGEA.

Residues 9-198 (ALIAGVDEVG…VQRVLAQAKG (190 aa)) form the RNase H type-2 domain. A divalent metal cation-binding residues include Asp15, Glu16, and Asp107.

Belongs to the RNase HII family. The cofactor is Mn(2+). Mg(2+) is required as a cofactor.

It localises to the cytoplasm. The enzyme catalyses Endonucleolytic cleavage to 5'-phosphomonoester.. Functionally, endonuclease that specifically degrades the RNA of RNA-DNA hybrids. The protein is Ribonuclease HII of Pseudoalteromonas translucida (strain TAC 125).